Reading from the N-terminus, the 600-residue chain is Beta-hexosaminidase (600 aa).

Residues 1 to 18 (MRISQICTVLSTVTSAVA) form the signal peptide. The propeptide occupies 19 to 96 (VGVNPLPAPR…PFPTPTAGAS (78 aa)). Threonine 78 carries O-linked (Man...) threonine glycosylation. O-linked (Man...) serine glycans are attached at residues serine 83 and serine 84. Residues aspartate 222 and histidine 275 each act as charge relay system in the active site. Cysteine 290 and cysteine 351 are disulfide-bonded. A glycan (N-linked (HexNAc...) asparagine) is linked at asparagine 318. Catalysis depends on glutamate 346, which acts as the Charge relay system. Asparagine 353 is a glycosylation site (N-linked (GlcNAc...) asparagine). An N-linked (HexNAc...) asparagine glycan is attached at asparagine 387. N-linked (GlcNAc...) asparagine glycosylation is present at asparagine 428. A disulfide bridge links cysteine 448 with cysteine 483. Residues asparagine 500 and asparagine 525 are each glycosylated (N-linked (GlcNAc...) asparagine). Residues cysteine 583 and cysteine 590 are joined by a disulfide bond.

Belongs to the glycosyl hydrolase 20 family. As to quaternary structure, homodimer. Oligosaccharide moieties may also take part in the dimerization. Dimerization is a pH-dependent reversible process. The individual catalytic cores dimerize and the catalytic core of one subunit in the active dimer interacts with the propeptide of the second subunit. Post-translationally, the precursor of the propeptide is intracellularly processed in the endoplasmic reticulum by a dibasic peptidase, different from Kex2, removing Lys-97--Arg-101 from the precursor producing the activated propeptide. The propeptide binds non-covalently to the catalytic domain. Propeptide binding is necessary for full activation of the enzyme, dimerization of the catalytic domain and secretion of the active enzyme. O-glycosylated. O-glycosylation (O-mannosylation) at the C-terminus of the propeptide is necessary for full enzyme activity. N-glycosylated. N-glycosylation of the catalytic domain increases the stability and solubility of the enzyme, especially at low pH. Contains high mannose-type (M4-M11) N-glycans at the C-terminus. N-glycan deglycosylation does not affect enzyme activity.

Its subcellular location is the secreted. The enzyme catalyses Hydrolysis of terminal non-reducing N-acetyl-D-hexosamine residues in N-acetyl-beta-D-hexosaminides.. Activated by non-covalent binding of the propeptide to the catalytic domain. The concentration of the propeptide is regulated in the endoplasmic reticulum and the propeptide thus regulates the amount of the active enzyme at various stages of the growth cycle. The dimeric enzyme has about half of the maximal activity in the presence of one bound propeptide, but is fully active with two bound O-glycosylated propeptides. Inhibited by N-acetylglucosamine (NAG)-thiazoline. Its function is as follows. Selectively hydrolyzes GlcNAcbeta(1-&gt;4)GlcNAc (N,N'-diacetylchitobiose) and Gal-NAcbeta(1-&gt;4)GlcNAc, but not their C-2 epimers GlcNAcbeta(1-&gt;4)ManNAc or Gal-NAcbeta(1-&gt;4)ManNAc. However, hydrolyzes both GlcNAcbeta(1-&gt;6)GlcNAc and GlcNAcbeta(1-&gt;6)ManNAc. Part of the binary chitinolytic system. Involved in hydrolysis of chitobiose and higher chito-oligomers (produced from cell wall chitin by endochitinases), thus contributing to the formation of germ tubes, fruit-bodies and septa during hyphenation. Hydrolyzes synthetic substrate p-nitrophenyl-beta-N-acetyl-D-glucosaminide (pNP-GlcNAc). Hydrolyzes synthetic substrate p-nitrophenyl-beta-N-acetyl-D-galactosaminide (pNP-GalNAc). Hydrolyzes chromogenic substrate 4-nitrophenyl-2-acetamido-2-deoxyglucopyranoside. This chain is Beta-hexosaminidase, found in Aspergillus oryzae (Yellow koji mold).